Reading from the N-terminus, the 437-residue chain is UDP-N-acetylmuramate--L-alanine ligase (437 aa).

108-114 is a binding site for ATP; it reads GAHGKTS.

Belongs to the MurCDEF family.

The protein localises to the cytoplasm. It catalyses the reaction UDP-N-acetyl-alpha-D-muramate + L-alanine + ATP = UDP-N-acetyl-alpha-D-muramoyl-L-alanine + ADP + phosphate + H(+). It functions in the pathway cell wall biogenesis; peptidoglycan biosynthesis. Cell wall formation. The chain is UDP-N-acetylmuramate--L-alanine ligase from Staphylococcus aureus (strain JH9).